Here is a 262-residue protein sequence, read N- to C-terminus: Carboxy-S-adenosyl-L-methionine synthase (262 aa).

Residues Tyr50, 84 to 86 (GCS), 137 to 138 (DI), Asn152, and Arg219 contribute to the S-adenosyl-L-methionine site.

This sequence belongs to the class I-like SAM-binding methyltransferase superfamily. Cx-SAM synthase family. In terms of assembly, homodimer.

The catalysed reaction is prephenate + S-adenosyl-L-methionine = carboxy-S-adenosyl-L-methionine + 3-phenylpyruvate + H2O. Functionally, catalyzes the conversion of S-adenosyl-L-methionine (SAM) to carboxy-S-adenosyl-L-methionine (Cx-SAM). The sequence is that of Carboxy-S-adenosyl-L-methionine synthase from Psychrobacter arcticus (strain DSM 17307 / VKM B-2377 / 273-4).